Reading from the N-terminus, the 1039-residue chain is Integrin alpha-IIb (1039 aa).

Residues 1 to 31 (MARALCPLQALWLLEWVLLLLGPCAAPPAWA) form the signal peptide. Topologically, residues 32 to 993 (LNLDPVQLTF…TQLLRALEER (962 aa)) are extracellular. FG-GAP repeat units lie at residues 35-96 (DPVQ…GGQC), 110-173 (VGSQ…RRAE), 187-238 (VEND…FSSY), 251-305 (SLSF…DSYY), 306-371 (QRLH…PHAL), 373-432 (APSL…GLRS), and 435-496 (SQVL…VQDS). Residue Asn-46 is glycosylated (N-linked (GlcNAc...) asparagine). Disulfide bonds link Cys-87/Cys-96, Cys-138/Cys-161, and Cys-177/Cys-198. Positions 274, 276, and 278 each coordinate Ca(2+). N-linked (GlcNAc...) asparagine glycosylation is present at Asn-280. Residues Thr-281, Glu-283, Asp-328, Asn-330, Asp-332, Arg-334, Asp-336, Asp-396, Asp-398, Asp-400, Tyr-402, Asp-404, Asp-457, Asp-459, Asn-461, Tyr-463, and Asp-465 each contribute to the Ca(2+) site. Intrachain disulfides connect Cys-504–Cys-515 and Cys-521–Cys-576. N-linked (GlcNAc...) asparagine glycosylation occurs at Asn-601. 4 disulfides stabilise this stretch: Cys-633–Cys-639, Cys-705–Cys-718, Cys-857–Cys-921, and Cys-911–Cys-916. N-linked (GlcNAc...) asparagine glycosylation occurs at Asn-711. O-linked (GalNAc...) serine; in variant S-874 glycosylation is present at Ile-874. Residue Ser-878 is glycosylated (O-linked (GalNAc...) serine). Gln-891 bears the Pyrrolidone carboxylic acid; in light chain form 1 mark. Asn-962 carries an N-linked (GlcNAc...) asparagine glycan. A helical transmembrane segment spans residues 994-1019 (AIPIWWVLVGVLGGLLLLTILVLAMW). The Cytoplasmic portion of the chain corresponds to 1020 to 1039 (KVGFFKRNRPPLEEDDEEGE). A GFFKR motif motif is present at residues 1022-1026 (GFFKR).

It belongs to the integrin alpha chain family. In terms of assembly, heterodimer of an alpha and a beta subunit. The alpha subunit is composed of a heavy and a light chain linked by a disulfide bond. Alpha-IIb associates with beta-3. Directly interacts with RNF181. Interacts (via C-terminus cytoplasmic tail region) with CIB1; the interaction is direct and calcium-dependent. Interacts (via C-terminus cytoplasmic tail region) with CIB2, CIB3 and CIB4; the interactions are stabilized/increased in a calcium and magnesium-dependent manner. ITGA2B:ITGB3 interacts with PPIA/CYPA; the interaction is ROS and PPIase activity-dependent and is increased in the presence of thrombin. ITGA2B:ITGB3 interacts with SELP (via C-type lectin domain); the interaction mediates cell-cell interaction and adhesion. Cleaved by ELANE; the cleavage promotes activation of platelet fibrinogen receptor integrin alpha-IIb/beta-3. Isoform 1 and isoform 2 are expressed in platelets and megakaryocytes, but not in reticulocytes. Not detected in Jurkat, nor in U937 cell lines. Isoform 3 is expressed in prostate adenocarcinoma, as well as in several erythroleukemia, prostate adenocarcinoma and melanoma cell lines, including PC-3, DU-145, HEL, WM983A, WM983B and WM35. Not detected in platelets, nor in normal prostate (at protein level).

The protein resides in the membrane. Integrin alpha-IIb/beta-3 is a receptor for fibronectin, fibrinogen, plasminogen, prothrombin, thrombospondin and vitronectin. It recognizes the sequence R-G-D in a wide array of ligands. It recognizes the sequence H-H-L-G-G-G-A-K-Q-A-G-D-V in fibrinogen gamma chain. Following activation integrin alpha-IIb/beta-3 brings about platelet/platelet interaction through binding of soluble fibrinogen. This step leads to rapid platelet aggregation which physically plugs ruptured endothelial cell surface. In Homo sapiens (Human), this protein is Integrin alpha-IIb (ITGA2B).